The following is a 2439-amino-acid chain: Protein roller-3 (2439 aa).

The N-terminal stretch at 1 to 26 is a signal peptide; the sequence is MLDFPRFSLFLFLLFSSFLFSSFVHA. Residues 27-1851 lie on the Extracellular side of the membrane; the sequence is ATVFSSSLKT…EEEKGGILPY (1825 aa). 13 N-linked (GlcNAc...) asparagine glycosylation sites follow: Asn64, Asn182, Asn334, Asn394, Asn496, Asn533, Asn657, Asn766, Asn868, Asn1003, Asn1036, Asn1090, and Asn1261. A Fibronectin type-III 1 domain is found at 618–720; the sequence is KPRIVAVSSI…STSNTALPDL (103 aa). Fibronectin type-III domains lie at 1403–1503, 1507–1628, 1629–1732, and 1738–1843; these read SKGI…TGFG, APRD…TLDV, PGTL…IQQA, and VPTA…EKEE. Asn1567, Asn1636, Asn1677, and Asn1779 each carry an N-linked (GlcNAc...) asparagine glycan. Residues 1852–1872 traverse the membrane as a helical segment; the sequence is FLGISIILLLAAMILVGCFWL. Topologically, residues 1873–2439 are cytoplasmic; sequence KSRRRQQMKK…GGTCRSVSQV (567 aa). In terms of domain architecture, Protein kinase spans 1928–2199; the sequence is VEIVRHISDC…ATILKIFETC (272 aa). ATP contacts are provided by residues 1934 to 1942 and Lys1963; that span reads ISDCSYGSV. Disordered regions lie at residues 2214–2277, 2315–2348, and 2412–2439; these read NEGS…RPAT, SQRP…NRTN, and HLRA…VSQV. Polar residues-rich tracts occupy residues 2216 to 2233, 2334 to 2347, and 2420 to 2439; these read GSDN…SSRE, ATSS…SNRT, and PPTR…VSQV.

It is found in the membrane. Its function is as follows. Involved in larval development and locomotion. The chain is Protein roller-3 from Caenorhabditis briggsae.